The following is a 177-amino-acid chain: Cytoglobin-1 (177 aa).

A Globin domain is found at 16–165 (PLTDKERVMI…LCCSIKAVYE (150 aa)). Residues H79 and H111 each coordinate heme b.

The protein belongs to the globin family. Monomeric.

The protein resides in the cytoplasm. It localises to the nucleus. It carries out the reaction Fe(II)-heme b-[protein] + nitric oxide + O2 = Fe(III)-heme b-[protein] + nitrate. The enzyme catalyses Fe(III)-heme b-[protein] + nitric oxide + H2O = Fe(II)-heme b-[protein] + nitrite + 2 H(+). The catalysed reaction is 2 superoxide + 2 H(+) = H2O2 + O2. It catalyses the reaction H2O2 + AH2 = A + 2 H2O. In terms of biological role, probable multifunctional globin with a hexacoordinated heme iron required for the catalysis of various reactions depending on redox condition of the cell as well as oxygen availability. Has a nitric oxide dioxygenase (NOD) activity and is most probably involved in cell-mediated and oxygen-dependent nitric oxide consumption. Under normoxic conditions functions as a nitric oxide dioxygenase (NOD) but under hypoxic conditions the globin may switch its function to that of a nitrite (NO2) reductase (NiR), generating nitric oxide. Could also have peroxidase and superoxide dismutase activities, detoxifying reactive oxygen species and protecting cells against oxidative stress. Also binds dioxygen with low affinity and could function as an oxygen sensor but has probably no function as a respiratory oxygen carrier. This Oryzias latipes (Japanese rice fish) protein is Cytoglobin-1.